A 124-amino-acid polypeptide reads, in one-letter code: Large ribosomal subunit protein bL12 (124 aa).

It belongs to the bacterial ribosomal protein bL12 family. In terms of assembly, homodimer. Part of the ribosomal stalk of the 50S ribosomal subunit. Forms a multimeric L10(L12)X complex, where L10 forms an elongated spine to which 2 to 4 L12 dimers bind in a sequential fashion. Binds GTP-bound translation factors.

Functionally, forms part of the ribosomal stalk which helps the ribosome interact with GTP-bound translation factors. Is thus essential for accurate translation. This Anaeromyxobacter dehalogenans (strain 2CP-C) protein is Large ribosomal subunit protein bL12.